Reading from the N-terminus, the 285-residue chain is Casein kinase II subunit beta-2 (285 aa).

A disordered region spans residues 226–285 (FKDAEDEAELDDDDEEEEEEEEEEEELAAMDEAEGAQQQHAAAAAGTATGGVAAGGEGVH). Over residues 229–259 (AEDEAELDDDDEEEEEEEEEEEELAAMDEAE) the composition is skewed to acidic residues. Residues 260 to 272 (GAQQQHAAAAAGT) show a composition bias toward low complexity. Residues 273–285 (ATGGVAAGGEGVH) show a composition bias toward gly residues.

This sequence belongs to the casein kinase 2 subunit beta family. As to quaternary structure, tetramer composed of two alpha chains, one beta chain and one beta' chain. Post-translationally, phosphorylated by alpha subunit.

Regulatory subunit of casein kinase II/CK2. As part of the kinase complex regulates the basal catalytic activity of the alpha subunit a constitutively active serine/threonine-protein kinase that phosphorylates a large number of substrates containing acidic residues C-terminal to the phosphorylated serine or threonine. This chain is Casein kinase II subunit beta-2 (ckb-2), found in Neurospora crassa (strain ATCC 24698 / 74-OR23-1A / CBS 708.71 / DSM 1257 / FGSC 987).